The chain runs to 339 residues: Heat-inducible transcription repressor HrcA (339 aa).

It belongs to the HrcA family.

In terms of biological role, negative regulator of class I heat shock genes (grpE-dnaK-dnaJ and groELS operons). Prevents heat-shock induction of these operons. The chain is Heat-inducible transcription repressor HrcA from Methylobacillus flagellatus (strain ATCC 51484 / DSM 6875 / VKM B-1610 / KT).